A 648-amino-acid polypeptide reads, in one-letter code: Transketolase (648 aa).

H22 is a binding site for substrate. Residues H62 and 109–111 each bind thiamine diphosphate; that span reads GPL. D150 contributes to the Mg(2+) binding site. Residues G151 and N180 each coordinate thiamine diphosphate. Residues N180 and V182 each contribute to the Mg(2+) site. Residues H252, R345, and S372 each coordinate substrate. A thiamine diphosphate-binding site is contributed by H252. The Proton donor role is filled by E397. F423 contacts thiamine diphosphate. Substrate is bound by residues H447, D455, and R506.

It belongs to the transketolase family. As to quaternary structure, homodimer. Mg(2+) serves as cofactor. Requires Ca(2+) as cofactor. Mn(2+) is required as a cofactor. It depends on Co(2+) as a cofactor. The cofactor is thiamine diphosphate.

It catalyses the reaction D-sedoheptulose 7-phosphate + D-glyceraldehyde 3-phosphate = aldehydo-D-ribose 5-phosphate + D-xylulose 5-phosphate. Its function is as follows. Catalyzes the transfer of a two-carbon ketol group from a ketose donor to an aldose acceptor, via a covalent intermediate with the cofactor thiamine pyrophosphate. The polypeptide is Transketolase (tkt) (Mycoplasma pneumoniae (strain ATCC 29342 / M129 / Subtype 1) (Mycoplasmoides pneumoniae)).